A 272-amino-acid chain; its full sequence is tRNA pseudouridine synthase B (272 aa).

Asp38 serves as the catalytic Nucleophile.

It belongs to the pseudouridine synthase TruB family. Type 1 subfamily.

It carries out the reaction uridine(55) in tRNA = pseudouridine(55) in tRNA. Functionally, responsible for synthesis of pseudouridine from uracil-55 in the psi GC loop of transfer RNAs. This is tRNA pseudouridine synthase B from Campylobacter jejuni subsp. jejuni serotype O:2 (strain ATCC 700819 / NCTC 11168).